A 100-amino-acid polypeptide reads, in one-letter code: Small ribosomal subunit protein uS14c (100 aa).

Belongs to the universal ribosomal protein uS14 family. As to quaternary structure, part of the 30S ribosomal subunit.

The protein resides in the plastid. Functionally, binds 16S rRNA, required for the assembly of 30S particles. In Euglena longa (Euglenophycean alga), this protein is Small ribosomal subunit protein uS14c.